Consider the following 267-residue polypeptide: Heme-containing CO-sensing transcriptional regulator RcoM 1 (267 aa).

Residues Arg15–Leu86 form the PAS domain. 2 residues coordinate heme: His74 and Met104. The region spanning Ile161 to Val266 is the HTH LytTR-type domain.

Requires heme as cofactor.

The protein resides in the cytoplasm. Functionally, one-component, b-type heme-containing aerobic sensor and transcriptional regulator that responds to CO by activating the expression of the oxidation operon cox. The protein is Heme-containing CO-sensing transcriptional regulator RcoM 1 (rcoM1) of Paraburkholderia xenovorans (strain LB400).